We begin with the raw amino-acid sequence, 46 residues long: METSSPALSVALGVMAVVLGLTGFGVYQAFGPPSKELDDPFDDHED.

Residues A7–Y27 form a helical membrane-spanning segment.

It belongs to the PsbN family.

It localises to the cellular thylakoid membrane. May play a role in photosystem I and II biogenesis. The protein is Protein PsbN of Synechococcus sp. (strain CC9902).